Reading from the N-terminus, the 328-residue chain is Nuclear transcription factor Y subunit A-8 (328 aa).

Residues 54 to 86 (KNISFQDQDSSSTLSSAQSSNDVTSSGDDNPSR) are disordered. The segment covering 57-75 (SFQDQDSSSTLSSAQSSND) has biased composition (low complexity). Over residues 76 to 86 (VTSSGDDNPSR) the composition is skewed to polar residues. The Subunit association domain (SAD) motif lies at 175–198 (FVNAKQFHAIMRRRQQRAKLEAQN). The NFYA/HAP2-type DNA-binding region spans 205–230 (KPYLHESRHVHALKRPRGSGGRFLNT).

It belongs to the NFYA/HAP2 subunit family. As to quaternary structure, heterotrimeric transcription factor composed of three components, NF-YA, NF-YB and NF-YC. NF-YB and NF-YC must interact and dimerize for NF-YA association and DNA binding. Expressed in the whole plant, except roots.

Its subcellular location is the nucleus. Its function is as follows. Stimulates the transcription of various genes by recognizing and binding to a CCAAT motif in promoters. This chain is Nuclear transcription factor Y subunit A-8 (NFYA8), found in Arabidopsis thaliana (Mouse-ear cress).